A 457-amino-acid chain; its full sequence is Cysteine--tRNA ligase (457 aa).

Residue Cys-30 participates in Zn(2+) binding. A 'HIGH' region motif is present at residues 32 to 42 (PTVYAPAHIGN). Residues Cys-221, His-246, and Glu-250 each contribute to the Zn(2+) site. The 'KMSKS' region motif lies at 278–282 (KMSKS). Residue Lys-281 participates in ATP binding.

Belongs to the class-I aminoacyl-tRNA synthetase family. In terms of assembly, monomer. Zn(2+) is required as a cofactor.

Its subcellular location is the cytoplasm. The catalysed reaction is tRNA(Cys) + L-cysteine + ATP = L-cysteinyl-tRNA(Cys) + AMP + diphosphate. The polypeptide is Cysteine--tRNA ligase (Opitutus terrae (strain DSM 11246 / JCM 15787 / PB90-1)).